The following is a 906-amino-acid chain: UPF0182 protein CA_C0010 (906 aa).

Helical transmembrane passes span 7-29 (IVTI…DFII), 47-69 (LAAI…WFYY), 96-118 (VAIV…VYWY), 153-175 (LYGV…YIVL), 208-230 (FAII…SFNL), 250-272 (LVFY…TSII), and 279-301 (IFVS…EIVQ). Low complexity predominate over residues 842-862 (NSSNNQSETRTETGGTSTDSS). Positions 842 to 875 (NSSNNQSETRTETGGTSTDSSNNKDKLKQAQDLY) are disordered.

It belongs to the UPF0182 family.

Its subcellular location is the cell membrane. The chain is UPF0182 protein CA_C0010 from Clostridium acetobutylicum (strain ATCC 824 / DSM 792 / JCM 1419 / IAM 19013 / LMG 5710 / NBRC 13948 / NRRL B-527 / VKM B-1787 / 2291 / W).